A 355-amino-acid polypeptide reads, in one-letter code: Neutral protease 2 homolog MEP6 (355 aa).

The N-terminal stretch at 1–19 is a signal peptide; that stretch reads MRLSSSLIALVALAGQALA. A propeptide spanning residues 20-179 is cleaved from the precursor; that stretch reads LPFNELAERD…ASAIPELNKR (160 aa). 2 disulfide bridges follow: C187–C259 and C266–C283. H307 contributes to the Zn(2+) binding site. E308 is a catalytic residue. Zn(2+) is bound by residues H311 and D322.

This sequence belongs to the peptidase M35 family. Zn(2+) is required as a cofactor.

It is found in the secreted. It carries out the reaction Preferential cleavage of bonds with hydrophobic residues in P1'. Also 3-Asn-|-Gln-4 and 8-Gly-|-Ser-9 bonds in insulin B chain.. Its function is as follows. Secreted metalloproteinase that allows assimilation of proteinaceous substrates. Shows high activities on basic nuclear substrates such as histone and protamine. May be involved in virulence. The polypeptide is Neutral protease 2 homolog MEP6 (MEP6) (Coccidioides posadasii (strain C735) (Valley fever fungus)).